The chain runs to 701 residues: Elongation factor G 1 (701 aa).

Residues 5–281 (SKYRNIGIFA…AVVDYLPSPT (277 aa)) enclose the tr-type G domain. Residues 14-21 (AHVDAGKT), 78-82 (DTPGH), and 132-135 (NKLD) contribute to the GTP site.

The protein belongs to the TRAFAC class translation factor GTPase superfamily. Classic translation factor GTPase family. EF-G/EF-2 subfamily.

The protein resides in the cytoplasm. Catalyzes the GTP-dependent ribosomal translocation step during translation elongation. During this step, the ribosome changes from the pre-translocational (PRE) to the post-translocational (POST) state as the newly formed A-site-bound peptidyl-tRNA and P-site-bound deacylated tRNA move to the P and E sites, respectively. Catalyzes the coordinated movement of the two tRNA molecules, the mRNA and conformational changes in the ribosome. The sequence is that of Elongation factor G 1 from Colwellia psychrerythraea (strain 34H / ATCC BAA-681) (Vibrio psychroerythus).